The primary structure comprises 391 residues: Serine acetyltransferase 3, mitochondrial (391 aa).

Disordered regions lie at residues 40–82 (KHHT…HDDE) and 353–375 (VGNP…IPGL). Over residues 45-56 (SPPPSPPPPPPM) the composition is skewed to pro residues.

This sequence belongs to the transferase hexapeptide repeat family. As to quaternary structure, homomultimer. Interacts with OASC. Component of the cysteine synthase complex (CSC) composed of two OAS-TL dimers and one SAT hexamer. In terms of tissue distribution, ubiquitous with higher levels in leaves and siliques. Localized in vascular tissues, particularly in phloem.

The protein resides in the mitochondrion. The enzyme catalyses L-serine + acetyl-CoA = O-acetyl-L-serine + CoA. Its pathway is amino-acid biosynthesis; L-cysteine biosynthesis; L-cysteine from L-serine: step 1/2. This chain is Serine acetyltransferase 3, mitochondrial (SAT3), found in Arabidopsis thaliana (Mouse-ear cress).